A 452-amino-acid chain; its full sequence is MPQVKIIAKNFMDMVASLPAIKLDKLYNNVFICEAILRSLPPLAKKYVLQMLYIDVPVPATMMEEWVLADGTSKHRVAIDRLIQLRIFSEISDRKRGTSYSLNPTFQNNLQKHIISGGVLPREPMNSDNAIKLPSLQELETYALKQWECFLLQLINSGQGEKLTGISSSMMKIFQRGLLSQRDKDGPRLTESGFQFLLMDTNAQLWYIIREYILNAEERDVDPADLISFLLELSFHVTGQAYNLNTLTEVQNNTLKDLADLGLVKLQQGRKDSWFIPTKLATNLSVSLADSSARKEGFVVMETNFRMYAYSTSKLQCEILRLFARIEYQLPNLIACAITKESLYNAFDNGITSDQIITFLQQNSHPRCADRVPSIPENVTDQIRLWETDLQRIEMTQAHFYDEFPSKDVFEAACDFAREWRGLLWEDSKRMRLVVKSEVHNQMREFLHTQSR.

It belongs to the TFB2 family. Component of the 7-subunit TFIIH core complex composed of XPB, XPD, TFB1/GTF2H1, GTF2H2/P44, TFB4/GTF2H3, TFB2/GTF2H4 and TFB5/GTF2H5, which is active in NER. The core complex associates with the 3-subunit CDK-activating kinase (CAK) module composed of CYCH1/cyclin H1, CDKD and MAT1/At4g30820 to form the 10-subunit holoenzyme (holo-TFIIH) active in transcription.

It is found in the nucleus. In terms of biological role, component of the general transcription and DNA repair factor IIH (TFIIH) core complex, which is involved in general and transcription-coupled nucleotide excision repair (NER) of damaged DNA and, when complexed to CAK, in RNA transcription by RNA polymerase II. In NER, TFIIH acts by opening DNA around the lesion to allow the excision of the damaged oligonucleotide and its replacement by a new DNA fragment. In transcription, TFIIH has an essential role in transcription initiation. When the pre-initiation complex (PIC) has been established, TFIIH is required for promoter opening and promoter escape. Phosphorylation of the C-terminal tail (CTD) of the largest subunit of RNA polymerase II by the kinase module CAK controls the initiation of transcription. The polypeptide is General transcription and DNA repair factor IIH subunit TFB2 (Arabidopsis thaliana (Mouse-ear cress)).